The primary structure comprises 208 residues: Large ribosomal subunit protein uL3c (208 aa).

The disordered stretch occupies residues 129–165 (TRGPMTHGSKNHREPGSIGQGSTPGKVHKGKKMAGRL).

This sequence belongs to the universal ribosomal protein uL3 family. Part of the 50S ribosomal subunit.

The protein resides in the plastid. It localises to the chloroplast. Its function is as follows. One of the primary rRNA binding proteins, it binds directly near the 3'-end of the 23S rRNA, where it nucleates assembly of the 50S subunit. The protein is Large ribosomal subunit protein uL3c (rpl3) of Rhodomonas salina (Cryptomonas salina).